We begin with the raw amino-acid sequence, 835 residues long: MSDSDGKKTLGLRGSGSRPGNVKQSFSHGRTKNVVVETKRKRVVVPKPGAGKGGAGGVAAGDASRRPAGISDAEMDRRLKALQAAKAREAEEAAQREAEEKARAEERERRRAEQEAKEREQREAEEKARQKAEEEERKRQEEAEAAKKRAAADKAAAAAPKSDAGVAPARPAPGGAPKPAAGPRKAEREREERGRGAKGRNDGGRRSGKLTLSQATGGEGGRQRSVASMKRKQERARQKAMGQVEREKIIRDVQLPEAIVVSELANRMAERVADVVKALMNMGMMVTQNQTIDADTAELIIEEFGHNVVRVSDADVEDVIKEIEDKEEDLQPRPPVITIMGHVDHGKTSLLDAIRDAKVVAGEAGGITQHIGAYQVTTDSGAVLSFLDTPGHAAFTSMRSRGAQVTDIVVLVVAADDSVMPQTVEAINHAKAAGVPMIVAINKIDKPAADPNKVRAELLQHEVIVEAMSGEVQDVEVSAHTGQGLDELLEAIALQAEILELKANPNRAAQGAVIEAQLDVGRGPVATVLVQTGTLRQGDIFVVGEQYGKVRALINDKGERVKEAGPSVPVEVLGLNGTPEAGDVLNVTETEAQAREIAEYREQAAKDKRAAAGAATTLEQLMQKAKEDENVSELPILVKADVQGSAEAIVQAMEKIGNDEVRVRVLHSGVGAITETDIGLAEASGAPVMGFNVRANASARNTANQKGVEIRYYSVIYDLVDDVKAAASGLLSAEIKENFIGYAEIKDVFKVSNVGKVAGCLVTEGVARRSAGVRLLRDNVVIHEGTLKTLKRFKDEVAEVQSGQECGMAFENYDDIRPKDVIEIFEREEVTRTLD.

Residues 1 to 240 (MSDSDGKKTL…RKQERARQKA (240 aa)) form a disordered region. Over residues 50–59 (AGKGGAGGVA) the composition is skewed to gly residues. The span at 86–152 (KAREAEEAAQ…AEAAKKRAAA (67 aa)) shows a compositional bias: basic and acidic residues. The segment covering 153-169 (DKAAAAAPKSDAGVAPA) has biased composition (low complexity). Residues 184-205 (RKAEREREERGRGAKGRNDGGR) show a composition bias toward basic and acidic residues. Positions 332–500 (PRPPVITIMG…AIALQAEILE (169 aa)) constitute a tr-type G domain. The interval 341-348 (GHVDHGKT) is G1. 341 to 348 (GHVDHGKT) is a binding site for GTP. Positions 366 to 370 (GITQH) are G2. The interval 388–391 (DTPG) is G3. GTP is bound by residues 388-392 (DTPGH) and 442-445 (NKID). The tract at residues 442 to 445 (NKID) is G4. Positions 478-480 (SAH) are G5.

Belongs to the TRAFAC class translation factor GTPase superfamily. Classic translation factor GTPase family. IF-2 subfamily.

The protein localises to the cytoplasm. In terms of biological role, one of the essential components for the initiation of protein synthesis. Protects formylmethionyl-tRNA from spontaneous hydrolysis and promotes its binding to the 30S ribosomal subunits. Also involved in the hydrolysis of GTP during the formation of the 70S ribosomal complex. The sequence is that of Translation initiation factor IF-2 from Ruegeria sp. (strain TM1040) (Silicibacter sp.).